Here is a 449-residue protein sequence, read N- to C-terminus: Ribosomal protein uS12 methylthiotransferase RimO (449 aa).

One can recognise an MTTase N-terminal domain in the interval 16–126 (PKISFVSLGC…VMEAVHAAIA (111 aa)). Cys-25, Cys-61, Cys-90, Cys-157, Cys-161, and Cys-164 together coordinate [4Fe-4S] cluster. The Radical SAM core domain maps to 143–381 (LTPRHYAYLK…MEHQQKISAR (239 aa)). The region spanning 384–449 (REKIGKHVSV…DAYDLHGKAV (66 aa)) is the TRAM domain.

It belongs to the methylthiotransferase family. RimO subfamily. [4Fe-4S] cluster serves as cofactor.

It localises to the cytoplasm. It catalyses the reaction L-aspartate(89)-[ribosomal protein uS12]-hydrogen + (sulfur carrier)-SH + AH2 + 2 S-adenosyl-L-methionine = 3-methylsulfanyl-L-aspartate(89)-[ribosomal protein uS12]-hydrogen + (sulfur carrier)-H + 5'-deoxyadenosine + L-methionine + A + S-adenosyl-L-homocysteine + 2 H(+). Functionally, catalyzes the methylthiolation of an aspartic acid residue of ribosomal protein uS12. In Beijerinckia indica subsp. indica (strain ATCC 9039 / DSM 1715 / NCIMB 8712), this protein is Ribosomal protein uS12 methylthiotransferase RimO.